We begin with the raw amino-acid sequence, 192 residues long: Der GTPase-activating protein YihI (192 aa).

Basic residues predominate over residues 1–12; that stretch reads MSAKQPNRKPAG. Disordered regions lie at residues 1 to 87 and 145 to 192; these read MSAK…IKEK and DTDD…PKKK. Residues 13 to 26 show a composition bias toward basic and acidic residues; sequence KRKESDASAQEGRE. The span at 27–36 shows a compositional bias: basic residues; the sequence is RKRAAKRKGL. Acidic residues predominate over residues 145–172; sequence DTDDDEDEADFDEADFDEPGQPASEEEL. Over residues 183–192 the composition is skewed to basic and acidic residues; it reads PEPKPEPKKK.

The protein belongs to the YihI family. As to quaternary structure, interacts with Der.

A GTPase-activating protein (GAP) that modifies Der/EngA GTPase function. May play a role in ribosome biogenesis. The protein is Der GTPase-activating protein YihI of Aeromonas hydrophila subsp. hydrophila (strain ATCC 7966 / DSM 30187 / BCRC 13018 / CCUG 14551 / JCM 1027 / KCTC 2358 / NCIMB 9240 / NCTC 8049).